The sequence spans 430 residues: Meiotically up-regulated gene 132 protein (430 aa).

The protein belongs to the UPF0300 family.

It is found in the mitochondrion. In terms of biological role, has a role in meiosis. In Schizosaccharomyces pombe (strain 972 / ATCC 24843) (Fission yeast), this protein is Meiotically up-regulated gene 132 protein (mug132).